We begin with the raw amino-acid sequence, 242 residues long: DNA repair protein RecO (242 aa).

It belongs to the RecO family.

In terms of biological role, involved in DNA repair and RecF pathway recombination. This is DNA repair protein RecO from Methylococcus capsulatus (strain ATCC 33009 / NCIMB 11132 / Bath).